Reading from the N-terminus, the 1166-residue chain is Reverse gyrase (1166 aa).

The RG N-terminal-type zinc finger occupies 1-40; the sequence is MINVMYKNSCPNCGGDISADRLLNGLPCETCLPYINGIDG. Zn(2+)-binding residues include Cys-10, Cys-13, Cys-28, and Cys-31. ATP is bound by residues Gln-92 and 109-116; that span reads APTGLGKT. A Helicase ATP-binding domain is found at 96–285; sequence LRRLVSNQSF…ALRLLTGFEP (190 aa). The DEAD box motif lies at 190–193; that stretch reads DDAD. Residues 576–1166 form a topoisomerase I region; sequence FNISTGLLIV…VNPLKSEQNV (591 aa). The 164-residue stretch at 580-743 folds into the Toprim domain; sequence TGLLIVESPT…NIYRITYHEI (164 aa). Glu-586 serves as a coordination point for Mg(2+). The segment at 662-689 adopts an RG C-terminal-type zinc-finger fold; the sequence is IKKCLDCNKTFSIASDKCPYCGSTNVQT. The Zn(2+) site is built by Cys-665, Cys-668, Cys-679, and Cys-682. Residue Asp-712 coordinates Mg(2+). A Topo IA-type catalytic domain is found at 759-1157; it reads NTNLVMSQIV…EIFSEISTLV (399 aa). Tyr-903 (O-(5'-phospho-DNA)-tyrosine intermediate) is an active-site residue.

In the N-terminal section; belongs to the DEAD box helicase family. DDVD subfamily. This sequence in the C-terminal section; belongs to the type IA topoisomerase family. As to quaternary structure, monomer. The cofactor is Zn(2+). It depends on Mg(2+) as a cofactor.

Its subcellular location is the cytoplasm. The catalysed reaction is ATP + H2O = ADP + phosphate + H(+). Inhibited by UV light-induced lesions; substrate is completely cleaved but a nicked form accumulates, suggesting the reaction is blocked between the cleavage and ligation steps. Inhibited by actinomycin D; substrate DNA remains negatively supercoiled in this case. Activity is stimulated by SSB from S.solfataricus strain P2. Positive supercoiling is inhibited by Sul7d (also called Sso7d) from S.solfataricus strain MT4; SSB from S.solfataricus strain P2 relieves this inhibition. Modifies the topological state of DNA by introducing positive supercoils in an ATP-dependent process. Increases the linking number in steps of +1. In vitro requires high concentrations to supercoil negatively supercoiled DNA, relaxes plasmid DNA first; DNA single-strand binding protein (SSB) from S.solfataricus strain P2 stimulates positive supercoiling. SSB stimulates DNA-binding by reverse gyrase, and thus all subsequent steps. Binds to single-stranded DNA, transiently cleaves and then rejoins the ends, introducing a positive supercoil in the process. The scissile phosphodiester is attacked by the catalytic tyrosine of the enzyme, resulting in the formation of a DNA-(5'-phosphotyrosyl)-enzyme intermediate. May be involved in DNA damage response. Probably involved in rewinding DNA strands in regions of the chromosome that have opened up to allow replication, transcription, DNA repair and/or for DNA protection. This is Reverse gyrase from Saccharolobus shibatae (strain ATCC 51178 / DSM 5389 / JCM 8931 / NBRC 15437 / B12) (Sulfolobus shibatae).